A 376-amino-acid polypeptide reads, in one-letter code: 1-deoxy-D-xylulose 5-phosphate reductoisomerase (376 aa).

The NADPH site is built by Thr12, Gly13, Ser14, Ile15, Arg39, Gln40, and Asn110. Residue Lys111 coordinates 1-deoxy-D-xylulose 5-phosphate. Glu112 contributes to the NADPH binding site. Asp136 is a Mn(2+) binding site. 1-deoxy-D-xylulose 5-phosphate-binding residues include Ser137, Glu138, Ser162, and His185. Glu138 contacts Mn(2+). An NADPH-binding site is contributed by Gly191. Residues Ser198, Asn203, Lys204, and Glu207 each contribute to the 1-deoxy-D-xylulose 5-phosphate site. Position 207 (Glu207) interacts with Mn(2+).

The protein belongs to the DXR family. The cofactor is Mg(2+). Mn(2+) is required as a cofactor.

It catalyses the reaction 2-C-methyl-D-erythritol 4-phosphate + NADP(+) = 1-deoxy-D-xylulose 5-phosphate + NADPH + H(+). The protein operates within isoprenoid biosynthesis; isopentenyl diphosphate biosynthesis via DXP pathway; isopentenyl diphosphate from 1-deoxy-D-xylulose 5-phosphate: step 1/6. Functionally, catalyzes the NADPH-dependent rearrangement and reduction of 1-deoxy-D-xylulose-5-phosphate (DXP) to 2-C-methyl-D-erythritol 4-phosphate (MEP). This Treponema pallidum (strain Nichols) protein is 1-deoxy-D-xylulose 5-phosphate reductoisomerase.